A 529-amino-acid polypeptide reads, in one-letter code: Delayed-rectifier potassium channel regulatory subunit KCNS1 (529 aa).

Over methionine 1–leucine 217 the chain is Cytoplasmic. The chain crosses the membrane as a helical span at residues proline 218 to isoleucine 239. Over histidine 240–proline 270 the chain is Extracellular. The chain crosses the membrane as a helical span at residues valine 271–leucine 293. Over alanine 294–proline 304 the chain is Cytoplasmic. The chain crosses the membrane as a helical span at residues leucine 305–alanine 322. Residues glycine 323–leucine 340 are Extracellular-facing. The chain crosses the membrane as a helical; Voltage-sensor span at residues glycine 341–histidine 361. The Cytoplasmic segment spans residues serine 362 to tyrosine 376. A helical membrane pass occupies residues arginine 377–tyrosine 398. Residues threonine 399–isoleucine 411 are Extracellular-facing. The segment at residues proline 412 to threonine 423 is an intramembrane region (helical). Residues threonine 424–aspartate 429 carry the Selectivity filter motif. Residues threonine 424–valine 431 lie within the membrane without spanning it. Over proline 432 to lysine 438 the chain is Extracellular. The helical transmembrane segment at leucine 439 to tyrosine 467 threads the bilayer. The Cytoplasmic portion of the chain corresponds to arginine 468–tyrosine 529. The interval glycine 494–tyrosine 529 is disordered. Residues threonine 502–aspartate 514 are compositionally biased toward basic and acidic residues.

This sequence belongs to the potassium channel family. S (TC 1.A.1.2) subfamily. Kv9.1/KCNS1 sub-subfamily. In terms of assembly, heterotetramer with KCNB1. Heterotetramer with KCNB2. Does not form homomultimers.

Its subcellular location is the cell membrane. Potassium channel regulatory subunit that modulate the delayed rectifier voltage-gated potassium channel activity of KCNB1 and KCNB2 by altering their kinetics, expression levels, and shifting the half-inactivation potential to more polarized values. While it does not form functional channels on its own, it can form functional heterotetrameric channels with KCNB1 and KCNB2. Each regulatory subunit has unique regulatory properties that can lead to extensive inhibition, significant changes in kinetics, and/or substantial shifts in the voltage dependencies of the inactivation process. This Macaca mulatta (Rhesus macaque) protein is Delayed-rectifier potassium channel regulatory subunit KCNS1.